Reading from the N-terminus, the 525-residue chain is Glutathione hydrolase-like YwrD proenzyme (525 aa).

The Nucleophile role is filled by threonine 339.

This sequence belongs to the gamma-glutamyltransferase family. In terms of assembly, this enzyme consists of two polypeptide chains, which are synthesized from a single polypeptide. Post-translationally, cleaved by autocatalysis into a large and a small subunit.

It catalyses the reaction an N-terminal (5-L-glutamyl)-[peptide] + an alpha-amino acid = 5-L-glutamyl amino acid + an N-terminal L-alpha-aminoacyl-[peptide]. It carries out the reaction glutathione + H2O = L-cysteinylglycine + L-glutamate. The enzyme catalyses an S-substituted glutathione + H2O = an S-substituted L-cysteinylglycine + L-glutamate. Functionally, overexpressed protein with an N-terminal His tag has been reported not to hydrolyze glutathione; it is not clear if the construct is processed to 2 subunits. The chain is Glutathione hydrolase-like YwrD proenzyme (ywrD) from Bacillus subtilis (strain 168).